Here is a 184-residue protein sequence, read N- to C-terminus: Large ribosomal subunit protein uL15 (184 aa).

Residues 1-62 (MDLSSLRPAK…QMPMYRRLPK (62 aa)) form a disordered region. Residues 21–35 (RGPGSGNGTTAGKGN) show a composition bias toward gly residues.

It belongs to the universal ribosomal protein uL15 family. In terms of assembly, part of the 50S ribosomal subunit.

In terms of biological role, binds to the 23S rRNA. The chain is Large ribosomal subunit protein uL15 from Chlorobaculum parvum (strain DSM 263 / NCIMB 8327) (Chlorobium vibrioforme subsp. thiosulfatophilum).